A 428-amino-acid chain; its full sequence is NADH-ubiquinone oxidoreductase chain 2 (428 aa).

14 consecutive transmembrane segments (helical) span residues 22-42 (IAFL…LHFG), 59-79 (LDES…VIMN), 84-104 (LGWE…YMLT), 108-128 (LLLM…ILSL), 140-160 (LLSS…FYGL), 185-205 (ILLL…LWVP), 218-238 (WMGS…YPLL), 241-261 (LAPF…VLMA), 269-289 (FLAY…AIGD), 292-312 (AYGY…VLLS), 332-352 (LGLG…FAGF), 356-376 (LLVL…LLIL), 384-404 (YYLK…SAPI), and 408-428 (YPNL…LLLL).

It belongs to the complex I subunit 2 family.

It is found in the mitochondrion inner membrane. The catalysed reaction is a ubiquinone + NADH + 5 H(+)(in) = a ubiquinol + NAD(+) + 4 H(+)(out). Core subunit of the mitochondrial membrane respiratory chain NADH dehydrogenase (Complex I) that is believed to belong to the minimal assembly required for catalysis. Complex I functions in the transfer of electrons from NADH to the respiratory chain. The immediate electron acceptor for the enzyme is believed to be ubiquinone. This Hyaloraphidium curvatum (Lower fungus) protein is NADH-ubiquinone oxidoreductase chain 2.